A 68-amino-acid chain; its full sequence is Defensin gallicin (68 aa).

The first 16 residues, 1-16, serve as a signal peptide directing secretion; it reads MWIESDAGVAIDRHAR.

Post-translationally, contains 5 disulfide bonds. As to expression, expressed in hemolymph, gills, digestive gland, foot, adductor muscles and mantle.

It localises to the secreted. The protein resides in the target cell membrane. Functionally, shows antibacterial activity against numerous Gram-positive bacteria. It selectively inhibits peptidoglycan biosynthesis through complex formation with the cell wall precursor lipid II (1:1 molar ratio) thus inhibiting cell wall synthesis. This chain is Defensin gallicin, found in Mytilus galloprovincialis (Mediterranean mussel).